A 261-amino-acid polypeptide reads, in one-letter code: ATP synthase subunit a (261 aa).

A run of 5 helical transmembrane segments spans residues 28–48, 89–109, 140–160, 203–223, and 229–249; these read AVHL…LTIF, IAPL…MDWV, NITF…SIKV, LFGN…IGVF, and FLWA…FMML.

This sequence belongs to the ATPase A chain family. As to quaternary structure, F-type ATPases have 2 components, CF(1) - the catalytic core - and CF(0) - the membrane proton channel. CF(1) has five subunits: alpha(3), beta(3), gamma(1), delta(1), epsilon(1). CF(0) has three main subunits: a(1), b(2) and c(9-12). The alpha and beta chains form an alternating ring which encloses part of the gamma chain. CF(1) is attached to CF(0) by a central stalk formed by the gamma and epsilon chains, while a peripheral stalk is formed by the delta and b chains.

It localises to the cell inner membrane. In terms of biological role, key component of the proton channel; it plays a direct role in the translocation of protons across the membrane. The polypeptide is ATP synthase subunit a (Colwellia psychrerythraea (strain 34H / ATCC BAA-681) (Vibrio psychroerythus)).